Consider the following 233-residue polypeptide: Purine nucleoside phosphorylase DeoD-type (233 aa).

His-4 contributes to the a purine D-ribonucleoside binding site. Residues Gly-20, Arg-24, Arg-43, and 87 to 90 (RVGT) contribute to the phosphate site. A purine D-ribonucleoside contacts are provided by residues 178-180 (EME) and 202-203 (SD). Catalysis depends on Asp-203, which acts as the Proton donor.

This sequence belongs to the PNP/UDP phosphorylase family. As to quaternary structure, homohexamer; trimer of homodimers.

It carries out the reaction a purine D-ribonucleoside + phosphate = a purine nucleobase + alpha-D-ribose 1-phosphate. The enzyme catalyses a purine 2'-deoxy-D-ribonucleoside + phosphate = a purine nucleobase + 2-deoxy-alpha-D-ribose 1-phosphate. Catalyzes the reversible phosphorolytic breakdown of the N-glycosidic bond in the beta-(deoxy)ribonucleoside molecules, with the formation of the corresponding free purine bases and pentose-1-phosphate. The sequence is that of Purine nucleoside phosphorylase DeoD-type from Listeria monocytogenes serotype 4b (strain CLIP80459).